Consider the following 361-residue polypeptide: Tyrosine--tRNA ligase (361 aa).

Residues Y36, Y162, Q166, D169, and Q184 each coordinate L-tyrosine. Positions 236–240 (KMSKS) match the 'KMSKS' region motif. K239 contacts ATP.

It belongs to the class-I aminoacyl-tRNA synthetase family. TyrS type 4 subfamily. Homodimer.

It is found in the cytoplasm. The catalysed reaction is tRNA(Tyr) + L-tyrosine + ATP = L-tyrosyl-tRNA(Tyr) + AMP + diphosphate + H(+). Catalyzes the attachment of tyrosine to tRNA(Tyr) in a two-step reaction: tyrosine is first activated by ATP to form Tyr-AMP and then transferred to the acceptor end of tRNA(Tyr). This Saccharolobus islandicus (strain L.S.2.15 / Lassen #1) (Sulfolobus islandicus) protein is Tyrosine--tRNA ligase.